We begin with the raw amino-acid sequence, 631 residues long: DNA mismatch repair protein MutL (631 aa).

Disordered stretches follow at residues 337–362 (PHSP…ELQS) and 400–429 (AVQS…RAEL).

It belongs to the DNA mismatch repair MutL/HexB family.

Its function is as follows. This protein is involved in the repair of mismatches in DNA. It is required for dam-dependent methyl-directed DNA mismatch repair. May act as a 'molecular matchmaker', a protein that promotes the formation of a stable complex between two or more DNA-binding proteins in an ATP-dependent manner without itself being part of a final effector complex. This Shewanella oneidensis (strain ATCC 700550 / JCM 31522 / CIP 106686 / LMG 19005 / NCIMB 14063 / MR-1) protein is DNA mismatch repair protein MutL.